A 259-amino-acid chain; its full sequence is Tryptophan synthase alpha chain (259 aa).

Catalysis depends on proton acceptor residues Glu35 and Asp46.

The protein belongs to the TrpA family. In terms of assembly, tetramer of two alpha and two beta chains.

It carries out the reaction (1S,2R)-1-C-(indol-3-yl)glycerol 3-phosphate + L-serine = D-glyceraldehyde 3-phosphate + L-tryptophan + H2O. The protein operates within amino-acid biosynthesis; L-tryptophan biosynthesis; L-tryptophan from chorismate: step 5/5. Its function is as follows. The alpha subunit is responsible for the aldol cleavage of indoleglycerol phosphate to indole and glyceraldehyde 3-phosphate. The polypeptide is Tryptophan synthase alpha chain (Methanococcus vannielii (strain ATCC 35089 / DSM 1224 / JCM 13029 / OCM 148 / SB)).